The sequence spans 406 residues: Glycosyltransferase GlyE (406 aa).

The interval 3–265 is GT8 domain; it reads NTKRAVVFAG…SVILNEWFSK (263 aa). UDP is bound by residues 11–16 and 106–107; these read AGDYAY and DS. Aspartate 106, aspartate 108, and histidine 227 together coordinate Mn(2+). Residue 227 to 233 coordinates UDP; sequence HYISQDK.

It in the N-terminal section; belongs to the glycosyltransferase 8 family. Mn(2+) serves as cofactor.

Its pathway is protein modification; protein glycosylation. Its function is as follows. Involved in the polymorphic O-glycosylation of the serine-rich repeat protein PsrP. Catalyzes the third step in glycosylation of PsrP in this bacteria. Transfers galactose from UDP-galactose to the terminal glucose moiety of already-glycosylated PsrP (using the short substrate PsrP-GlcNAc-Glc). Has a very marked preference for PsrP substrate that has already been modified by GlcNAc and glucose. Has hydrolytic activity against UDP-galactose but none against UDP-glucose. Functionally, also catalyzes the fourth step in glycosylation of PsrP in this bacteria. Can transfer the sugar from UDP-galactose to the terminal sugar moiety of PsrP-GlcNAc-Glc-Glc and of PsrP-GlcNAc-Glc-Gal. The protein is Glycosyltransferase GlyE of Streptococcus pneumoniae serotype 4 (strain ATCC BAA-334 / TIGR4).